Consider the following 271-residue polypeptide: Type III pantothenate kinase (271 aa).

6-13 contacts ATP; it reads DVRNTHTV. A substrate-binding site is contributed by 109-112; that stretch reads GADR. Catalysis depends on Asp111, which acts as the Proton acceptor. A K(+)-binding site is contributed by Asp131. An ATP-binding site is contributed by Ser134. Thr186 is a substrate binding site.

It belongs to the type III pantothenate kinase family. Homodimer. NH4(+) serves as cofactor. It depends on K(+) as a cofactor.

It is found in the cytoplasm. It carries out the reaction (R)-pantothenate + ATP = (R)-4'-phosphopantothenate + ADP + H(+). It functions in the pathway cofactor biosynthesis; coenzyme A biosynthesis; CoA from (R)-pantothenate: step 1/5. Its function is as follows. Catalyzes the phosphorylation of pantothenate (Pan), the first step in CoA biosynthesis. The polypeptide is Type III pantothenate kinase (Mycolicibacterium smegmatis (strain ATCC 700084 / mc(2)155) (Mycobacterium smegmatis)).